The primary structure comprises 382 residues: Mannitol-1-phosphate 5-dehydrogenase (382 aa).

3-14 serves as a coordination point for NAD(+); it reads ALHFGAGNIGRG.

The protein belongs to the mannitol dehydrogenase family.

It catalyses the reaction D-mannitol 1-phosphate + NAD(+) = beta-D-fructose 6-phosphate + NADH + H(+). This chain is Mannitol-1-phosphate 5-dehydrogenase, found in Salmonella typhi.